Here is a 298-residue protein sequence, read N- to C-terminus: Chitin deacetylase (298 aa).

The N-terminal stretch at Met-1 to Ala-16 is a signal peptide. Positions Asn-39–Val-222 constitute a NodB homology domain. Residue Asp-46 is the Proton acceptor of the active site. Asp-46 contacts acetate. The Co(2+) site is built by Asp-47, His-99, and His-103. Residue Tyr-140 participates in acetate binding. His-196 serves as the catalytic Proton donor. A Chitin-binding type-1 domain is found at Asp-256–Thr-298. 4 cysteine pairs are disulfide-bonded: Cys-259/Cys-273, Cys-267/Cys-279, Cys-272/Cys-286, and Cys-290/Cys-297.

It belongs to the polysaccharide deacetylase family. It depends on Co(2+) as a cofactor.

The protein localises to the secreted. The catalysed reaction is [(1-&gt;4)-N-acetyl-beta-D-glucosaminyl](n) + n H2O = chitosan + n acetate. Inhibited by Fe(2+) and to a lesser extent by Mn(2+). Its function is as follows. Hydrolyzes the N-acetamido groups of N-acetyl-D-glucosamine polymers in chitin to form chitosan and acetate. May play a role in evasion of the host immune response; plant chitinases liberate chitin molecules from the fungal cell wall which act as elicitors of the plant immune response, deacetylation of the liberated chitin neutralizes elicitor activity. In Pestalotiopsis sp, this protein is Chitin deacetylase.